We begin with the raw amino-acid sequence, 197 residues long: SIGLEC family-like protein 1 (197 aa).

Residues 118-138 (GAIYAGIVIALLFLCLLPLIV) traverse the membrane as a helical segment. The tract at residues 160–179 (VRASQELEMSLKPEEPGKPV) is disordered. The segment covering 162–176 (ASQELEMSLKPEEPG) has biased composition (basic and acidic residues).

It is found in the membrane. In Homo sapiens (Human), this protein is SIGLEC family-like protein 1 (SIGLECL1).